Consider the following 145-residue polypeptide: Aminoglycoside N(6')-acetyltransferase type 1 (145 aa).

One can recognise an N-acetyltransferase domain in the interval 1–145; the sequence is MDIRQMNRTH…ERVIFYRKRC (145 aa). Substrate contacts are provided by Trp22, His25, Tyr66, and Glu79. Residues 81–83 and 89–94 contribute to the acetyl-CoA site; these read IFV and QRGVAK. Substrate is bound at residue Asp115. Asn120 is an acetyl-CoA binding site. Glu136 is a binding site for substrate.

In terms of assembly, homodimer.

The enzyme catalyses kanamycin B + acetyl-CoA = N(6')-acetylkanamycin B + CoA + H(+). In terms of biological role, catalyzes the transfer of an acetyl group from acetyl-CoA to the 6'-amino group of aminoglycoside molecules conferring resistance to antibiotics containing the purpurosamine ring. The protein is Aminoglycoside N(6')-acetyltransferase type 1 of Salmonella typhimurium (strain LT2 / SGSC1412 / ATCC 700720).